Consider the following 299-residue polypeptide: Beta-lactamase VEB-1 (299 aa).

The N-terminal stretch at 1 to 23 is a signal peptide; sequence MKIVKRILLVLLSLFFTIVYSNA. Residue S68 is the Nucleophile; acyl-ester intermediate of the active site. Residues K71, S131, and E167 each coordinate a beta-lactam. E167 functions as the Proton acceptor in the catalytic mechanism.

Belongs to the class-A beta-lactamase family.

It catalyses the reaction a beta-lactam + H2O = a substituted beta-amino acid. With respect to regulation, inhibited by the beta-lactamase-blocking agent clavulanic acid. Functionally, class A beta-lactamase which confers resistance to the beta-lactam antibiotics, including penicillins and cephalosporins, in E.coli strain JM109. Acts via hydrolysis of the beta-lactam ring. Has penicillin-, and cephalosporin-hydrolyzing activities. The chain is Beta-lactamase VEB-1 from Pseudomonas aeruginosa.